The following is a 718-amino-acid chain: MIGTRVGGSGSTEIVQANQPQPSAAVAQAHPHAVSPSSNPPLTASQSAAQAPESSAAGAARLPVAPRHLPTLEKFRAEQPTVQGTSTPTISANAALLIGSLLQSEKLPFEVMAARLSPERYALQQFHGSDLQQMLGRFAEPGHLPGKAETEQLIKGFARSLADQLEHFQLMHDATAEAFGPGGLRDRNTLAVSQAALGEYAGRASKSIEAGLNHSLAVLDERIAALDSQLEGATEDSRPVLLMDRQALETARAMLSDLHVDFCKSPEAKRLSAVAAHTQMDALIDKLNVDRSSVGGWKGIGPIVAAAVPQFMVSMLHLGYIRTATSDAMKDAVPEKSADASMKRALAVGLTAGVAHEGVTNLLKPMVQAGFQKAGLNERLNMVPLKGIDTDSVIPDPFELKNDNGALVRKTPEEAAEDKAFVASERAVLNQKKVQVSSTHPLGEMIPYGAFGGGQAVRQMLNDFNLLNGQTLSARAVTSGIAGAISATTQTIAQLNSTYVDPRGRKIPVFTPDRANADLGKDLAKGLDLREPAVRTAFYSKAVSGVQSAALNGALPSVAVQPQGASGTLSAGNIMRNMALAATGSVSYLSTLYANQSVTAEAKALKEAGMGGATPMVARTETALSNIRHPDRASLPHTFQPDTLGGVPRAVENAYHMARGALQLPTQVVVDTVRVVEDGVASGVSSLRDAHKPAETSSPTADDAAAVELTAMEEGRRR.

The span at 1-10 (MIGTRVGGSG) shows a compositional bias: gly residues. Disordered stretches follow at residues 1–63 (MIGT…ARLP) and 683–718 (GVSS…GRRR). Polar residues predominate over residues 11 to 22 (STEIVQANQPQP). A compositionally biased stretch (low complexity) spans 44–60 (ASQSAAQAPESSAAGAA).

In terms of assembly, interacts with the chaperone ShcM.

It localises to the secreted. It is found in the host membrane. In terms of biological role, involved in the suppression of basal resistance and promotion of disease symptoms in plants. May be involved in the inhibition of a host vesicle trafficking pathway. In Pseudomonas syringae pv. syringae (strain B728a), this protein is Effector protein hopM1 (hopM1).